The primary structure comprises 87 residues: LYR motif-containing protein 2 (87 aa).

The N-terminal 19 residues, 1–19 (MGSRLPPAALTLKQFLVRQ), are a transit peptide targeting the mitochondrion.

The protein belongs to the complex I LYR family.

The protein resides in the mitochondrion. In terms of biological role, involved in efficient integration of the N-module into mitochondrial respiratory chain complex I. The protein is LYR motif-containing protein 2 (lyrm2) of Xenopus tropicalis (Western clawed frog).